The following is a 245-amino-acid chain: Phosducin (245 aa).

Positions 1–70 are disordered; sequence MEKAKSQSLE…DKDSKERFSR (70 aa). The Phosducin domain maps to 1 to 244; the sequence is MEKAKSQSLE…LEQTNMEEDM (244 aa). Composition is skewed to basic and acidic residues over residues 28 to 50 and 58 to 69; these read DWRK…KEIL and SRDDKDSKERFS. The residue at position 73 (Ser-73) is a Phosphoserine; by PKA. A thioredoxin fold region spans residues 111 to 245; that stretch reads YGFVYELESG…EQTNMEEDME (135 aa).

This sequence belongs to the phosducin family. As to quaternary structure, interacts with CRX. Forms a complex with the beta and gamma subunits of the GTP-binding protein, transducin. In terms of processing, light-induced changes in cyclic nucleotide levels modulate the phosphorylation of this protein by cAMP kinase.

It localises to the cytoplasm. The protein resides in the cytosol. It is found in the nucleus. Its subcellular location is the cell projection. The protein localises to the cilium. It localises to the photoreceptor outer segment. The protein resides in the photoreceptor inner segment. In terms of biological role, inhibits the transcriptional activation activity of the cone-rod homeobox CRX. May participate in the regulation of visual phototransduction or in the integration of photoreceptor metabolism. The sequence is that of Phosducin (PDC) from Bos taurus (Bovine).